We begin with the raw amino-acid sequence, 454 residues long: UDP-N-acetylmuramate--L-alanine ligase (454 aa).

109-115 (GTHGKTT) serves as a coordination point for ATP.

This sequence belongs to the MurCDEF family.

It localises to the cytoplasm. The enzyme catalyses UDP-N-acetyl-alpha-D-muramate + L-alanine + ATP = UDP-N-acetyl-alpha-D-muramoyl-L-alanine + ADP + phosphate + H(+). It participates in cell wall biogenesis; peptidoglycan biosynthesis. Its function is as follows. Cell wall formation. In Protochlamydia amoebophila (strain UWE25), this protein is UDP-N-acetylmuramate--L-alanine ligase.